We begin with the raw amino-acid sequence, 439 residues long: Serine--tRNA ligase (439 aa).

237–239 is an L-serine binding site; it reads TAE. 268-270 lines the ATP pocket; that stretch reads RAE. Residue Glu-291 coordinates L-serine. Residue 362-365 participates in ATP binding; that stretch reads EISS. Ser-397 lines the L-serine pocket.

This sequence belongs to the class-II aminoacyl-tRNA synthetase family. Type-1 seryl-tRNA synthetase subfamily. Homodimer. The tRNA molecule binds across the dimer.

The protein resides in the cytoplasm. The enzyme catalyses tRNA(Ser) + L-serine + ATP = L-seryl-tRNA(Ser) + AMP + diphosphate + H(+). The catalysed reaction is tRNA(Sec) + L-serine + ATP = L-seryl-tRNA(Sec) + AMP + diphosphate + H(+). Its pathway is aminoacyl-tRNA biosynthesis; selenocysteinyl-tRNA(Sec) biosynthesis; L-seryl-tRNA(Sec) from L-serine and tRNA(Sec): step 1/1. Catalyzes the attachment of serine to tRNA(Ser). Is also able to aminoacylate tRNA(Sec) with serine, to form the misacylated tRNA L-seryl-tRNA(Sec), which will be further converted into selenocysteinyl-tRNA(Sec). In Afipia carboxidovorans (strain ATCC 49405 / DSM 1227 / KCTC 32145 / OM5) (Oligotropha carboxidovorans), this protein is Serine--tRNA ligase.